Here is a 375-residue protein sequence, read N- to C-terminus: MTCPVIELAQQLIRQPSISPDDKGCQDIMIAHLQTIGFTIERMPFGDTNNFWAYRGIGPTLAFAGHTDVVPAGDESQWEYPPFEPTIRNGMLYGRGAADMKGSLAAMIVAAERFVAAHPNHNGRLAFLITSDEEAKATHGTVKVVEALMSRNERLDYCLIGEPSSQHRLGDMVKNGRRGSLTANLTVHGIQGHVAYPHLADNPIHRVLPALQTLVNTHWDEGNEFFPATSMQIANIHAGTGSHNVIPGNVQVQFNFRFSTELTDSQIREQVETILKNHNLNYTIEWILAGQPFLTAKGELVNAVIQSIDQYCGYQPELSTSGGTSDGRFIAQMGAQVVELGPLNSTIHKVNESVSAADLQQLSRIYQRVMEQLIQ.

H66 provides a ligand contact to Zn(2+). D68 is an active-site residue. D99 lines the Zn(2+) pocket. E133 serves as the catalytic Proton acceptor. 3 residues coordinate Zn(2+): E134, E162, and H348.

The protein belongs to the peptidase M20A family. DapE subfamily. In terms of assembly, homodimer. Requires Zn(2+) as cofactor. The cofactor is Co(2+).

The catalysed reaction is N-succinyl-(2S,6S)-2,6-diaminopimelate + H2O = (2S,6S)-2,6-diaminopimelate + succinate. The protein operates within amino-acid biosynthesis; L-lysine biosynthesis via DAP pathway; LL-2,6-diaminopimelate from (S)-tetrahydrodipicolinate (succinylase route): step 3/3. Its function is as follows. Catalyzes the hydrolysis of N-succinyl-L,L-diaminopimelic acid (SDAP), forming succinate and LL-2,6-diaminopimelate (DAP), an intermediate involved in the bacterial biosynthesis of lysine and meso-diaminopimelic acid, an essential component of bacterial cell walls. The chain is Succinyl-diaminopimelate desuccinylase from Photorhabdus laumondii subsp. laumondii (strain DSM 15139 / CIP 105565 / TT01) (Photorhabdus luminescens subsp. laumondii).